The primary structure comprises 472 residues: Excisase A (472 aa).

The region spanning 244–429 (EILSGITKFE…FSLDMRKLAI (186 aa)) is the Tyr recombinase domain. Active-site residues include R287, K317, R384, and H407. The active-site O-(3'-phospho-DNA)-tyrosine intermediate is the Y416.

This sequence belongs to the XisA/XisC recombinase family.

Its function is as follows. Essential for DNA excision. Site specific recombinase necessary for the excision of the 11 kb nifD element during heterocyst differentiation. This Nostoc sp. (strain PCC 7120 / SAG 25.82 / UTEX 2576) protein is Excisase A (xisA).